The sequence spans 320 residues: Dual oxidase maturation factor 2 (320 aa).

Over M1 to S21 the chain is Extracellular. A helical transmembrane segment spans residues V22–L42. Residues P43–R56 are Cytoplasmic-facing. The helical transmembrane segment at V57–F77 threads the bilayer. Over V78–T183 the chain is Extracellular. N-linked (GlcNAc...) asparagine glycans are attached at residues N84, N109, and N121. The helical transmembrane segment at L184 to L204 threads the bilayer. The Cytoplasmic portion of the chain corresponds to Y205 to G206. Residues G207–I227 traverse the membrane as a helical segment. Residues S228–G247 are Extracellular-facing. A helical transmembrane segment spans residues A248–V268. The Cytoplasmic portion of the chain corresponds to S269–L320.

The protein belongs to the DUOXA family. As to quaternary structure, heterodimer with DUXA2; disulfide-linked. Interacts with CSNK1G2. N-glycosylated. As to expression, specifically expressed in thyroid. Also detected in salivary glands.

It localises to the endoplasmic reticulum membrane. In terms of biological role, required for the maturation and the transport from the endoplasmic reticulum to the plasma membrane of functional DUOX2. May play a role in thyroid hormone synthesis. The polypeptide is Dual oxidase maturation factor 2 (DUOXA2) (Homo sapiens (Human)).